Here is a 343-residue protein sequence, read N- to C-terminus: GTPase Obg (343 aa).

In terms of domain architecture, Obg spans 1–157 (MKFIDEVSIS…IEVRLELKLI (157 aa)). Residues 13 to 44 (SGRGGPGCVSFRRESMQARGGPDGGNGGKGGD) are disordered. A compositionally biased stretch (gly residues) spans 33 to 43 (GPDGGNGGKGG). The OBG-type G domain maps to 158–338 (ADVGIVGFPN…FVQELARQIL (181 aa)). Residues 164–171 (GFPNAGKS), 189–193 (FTTLT), 211–214 (DIPG), 290–293 (NKID), and 319–321 (SAV) contribute to the GTP site. Ser-171 and Thr-191 together coordinate Mg(2+).

This sequence belongs to the TRAFAC class OBG-HflX-like GTPase superfamily. OBG GTPase family. As to quaternary structure, monomer. It depends on Mg(2+) as a cofactor.

The protein resides in the cytoplasm. Its function is as follows. An essential GTPase which binds GTP, GDP and possibly (p)ppGpp with moderate affinity, with high nucleotide exchange rates and a fairly low GTP hydrolysis rate. Plays a role in control of the cell cycle, stress response, ribosome biogenesis and in those bacteria that undergo differentiation, in morphogenesis control. In Bdellovibrio bacteriovorus (strain ATCC 15356 / DSM 50701 / NCIMB 9529 / HD100), this protein is GTPase Obg.